The primary structure comprises 270 residues: Type II restriction enzyme CeqI (270 aa).

It carries out the reaction Endonucleolytic cleavage of DNA to give specific double-stranded fragments with terminal 5'-phosphates.. Its function is as follows. A P subtype restriction enzyme that recognizes the double-stranded sequence 5'-GATATC-3' and cleaves after T-3. The protein is Type II restriction enzyme CeqI (ceqIR) of Rhodococcus hoagii (Corynebacterium equii).